The following is a 672-amino-acid chain: Putative per-hexamer repeat protein 5 (672 aa).

Composition is skewed to gly residues over residues 141–161 (TGTG…GTGT), 171–191 (TDRG…GTGT), 215–233 (TGTG…GTDT), 243–263 (TGTG…GTGT), 273–295 (TDRG…GTGT), 303–355 (TGTG…GSGS), and 365–389 (TGTG…GSGS). Disordered regions lie at residues 141-193 (TGTG…GTGT) and 213-672 (TGTG…TGTA). Positions 390–424 (GTAKVTGTATTTATVTETGTAKVTGTDTGTAKVTG) are enriched in low complexity. Residues 425-469 (TGTGTGTGTGTGTGTGTGTGTGTGTGTGTGTGTGTGTGTGTGSGS) show a composition bias toward gly residues. Residues 470–486 (GTAKVTGTDTGTAKVTG) are compositionally biased toward low complexity. The segment covering 487 to 537 (TGTGTGTGTGTGTGTGTGTGTGTGSGSGSGSGSGSGSGTGTGTGLGSGSGS) has biased composition (gly residues). The segment covering 538–552 (GTAKVTGTGTAKVTG) has biased composition (low complexity). Positions 553 to 617 (TGTGTGTGTG…GTGTGTGTGT (65 aa)) are enriched in gly residues. Residues 618-636 (GTSTVTVRGTGTGTATATG) are compositionally biased toward low complexity. Composition is skewed to gly residues over residues 637 to 653 (TGTG…GTGT) and 663 to 672 (RGTGTGTGTA).

The protein is Putative per-hexamer repeat protein 5 (Phxr5) of Mus musculus (Mouse).